The chain runs to 85 residues: Sec-independent protein translocase protein TatA (85 aa).

A helical membrane pass occupies residues 1 to 21 (MAGLQGWQLVIIILLAILLFA). The interval 43-85 (VKQMRTEGKDAKDERSGTGSTAADEPVEGRVVDRDETDPRDQR) is disordered. Basic and acidic residues-rich tracts occupy residues 44 to 58 (KQMR…DERS) and 69 to 85 (VEGR…RDQR).

Belongs to the TatA/E family. The Tat system comprises two distinct complexes: a TatABC complex, containing multiple copies of TatA, TatB and TatC subunits, and a separate TatA complex, containing only TatA subunits. Substrates initially bind to the TatABC complex, which probably triggers association of the separate TatA complex to form the active translocon.

It is found in the cell membrane. In terms of biological role, part of the twin-arginine translocation (Tat) system that transports large folded proteins containing a characteristic twin-arginine motif in their signal peptide across membranes. TatA could form the protein-conducting channel of the Tat system. The sequence is that of Sec-independent protein translocase protein TatA from Micrococcus luteus (strain ATCC 4698 / DSM 20030 / JCM 1464 / CCM 169 / CCUG 5858 / IAM 1056 / NBRC 3333 / NCIMB 9278 / NCTC 2665 / VKM Ac-2230) (Micrococcus lysodeikticus).